The primary structure comprises 215 residues: MSGPDPETKMQFLFALRSKGVTDKRVLAAMEEVDRGLFVRGLFSGRAYEDMPLPIACGQTISQPSVVGLMTQALEVNPRDKVLEVGTGSGYQAAILAKLARRVYTVDRHARLVRAAQLVFQQLQLVNITTMTADGSFGLPDQAPFDRIIVTAAAEDAPGPLLAQLKIGGIMVLPVGQSDTVQTLIRVRRTEQGFDYDELRPVRFVPLLEGLGKDG.

Serine 62 is a catalytic residue.

It belongs to the methyltransferase superfamily. L-isoaspartyl/D-aspartyl protein methyltransferase family.

Its subcellular location is the cytoplasm. The catalysed reaction is [protein]-L-isoaspartate + S-adenosyl-L-methionine = [protein]-L-isoaspartate alpha-methyl ester + S-adenosyl-L-homocysteine. Functionally, catalyzes the methyl esterification of L-isoaspartyl residues in peptides and proteins that result from spontaneous decomposition of normal L-aspartyl and L-asparaginyl residues. It plays a role in the repair and/or degradation of damaged proteins. The protein is Protein-L-isoaspartate O-methyltransferase of Ruegeria pomeroyi (strain ATCC 700808 / DSM 15171 / DSS-3) (Silicibacter pomeroyi).